Here is a 508-residue protein sequence, read N- to C-terminus: Cyclin-A1-1 (508 aa).

A compositionally biased stretch (low complexity) spans 1–28 (MSSNLAASRRSSSSSSVAAAAAAKRPAV). Disordered stretches follow at residues 1-40 (MSSN…GKAA) and 82-125 (VKKG…ESVL). Over residues 29 to 39 (GEGGGGGGGKA) the composition is skewed to gly residues. The span at 98 to 111 (ASAVKSASAKPAPA) shows a compositional bias: low complexity.

The protein belongs to the cyclin family. Cyclin AB subfamily. As to expression, expressed in the dividing region of the root cap and root apex. Expressed in the intercalary meristem of internodes and in adventitious roots under submergence conditions.

Functionally, involved in the control of the cell cycle at the G2/M (mitosis) transition. The protein is Cyclin-A1-1 (CYCA1-1) of Oryza sativa subsp. japonica (Rice).